The sequence spans 473 residues: Photosystem II CP43 reaction center protein (473 aa).

Positions 1-14 (MKTLYSLRRFSHVE) are excised as a propeptide. Threonine 15 carries the N-acetylthreonine modification. The residue at position 15 (threonine 15) is a Phosphothreonine. 5 helical membrane-spanning segments follow: residues 69–93 (LFEV…PHLA), 134–155 (LLGP…KDRN), 178–200 (KALY…RKIT), 255–275 (KPFA…LSYS), and 291–312 (WFNN…ASQA). Glutamate 367 serves as a coordination point for [CaMn4O5] cluster. The helical transmembrane segment at 447–471 (RARAAAAGFEKGIDRDFEPVLSMTP) threads the bilayer.

This sequence belongs to the PsbB/PsbC family. PsbC subfamily. PSII is composed of 1 copy each of membrane proteins PsbA, PsbB, PsbC, PsbD, PsbE, PsbF, PsbH, PsbI, PsbJ, PsbK, PsbL, PsbM, PsbT, PsbX, PsbY, PsbZ, Psb30/Ycf12, at least 3 peripheral proteins of the oxygen-evolving complex and a large number of cofactors. It forms dimeric complexes. Binds multiple chlorophylls and provides some of the ligands for the Ca-4Mn-5O cluster of the oxygen-evolving complex. It may also provide a ligand for a Cl- that is required for oxygen evolution. PSII binds additional chlorophylls, carotenoids and specific lipids. is required as a cofactor.

It is found in the plastid membrane. In terms of biological role, one of the components of the core complex of photosystem II (PSII). It binds chlorophyll and helps catalyze the primary light-induced photochemical processes of PSII. PSII is a light-driven water:plastoquinone oxidoreductase, using light energy to abstract electrons from H(2)O, generating O(2) and a proton gradient subsequently used for ATP formation. In Cuscuta gronovii (Common dodder), this protein is Photosystem II CP43 reaction center protein.